A 347-amino-acid chain; its full sequence is D-alanine--D-alanine ligase (347 aa).

One can recognise an ATP-grasp domain in the interval 134 to 332 (KLYAKDLGVK…LAQSLPKTPK (199 aa)). ATP is bound at residue 161–216 (LIGFNFPFIIKPSNAGSSLGVSVVKEEKELIYALDGAFEYSKEILIEPFIQGVKEY). Residues aspartate 288, glutamate 300, and asparagine 302 each coordinate Mg(2+).

Belongs to the D-alanine--D-alanine ligase family. Mg(2+) is required as a cofactor. Requires Mn(2+) as cofactor.

The protein resides in the cytoplasm. The catalysed reaction is 2 D-alanine + ATP = D-alanyl-D-alanine + ADP + phosphate + H(+). It functions in the pathway cell wall biogenesis; peptidoglycan biosynthesis. In terms of biological role, cell wall formation. The chain is D-alanine--D-alanine ligase from Helicobacter pylori (strain Shi470).